Reading from the N-terminus, the 740-residue chain is DNA (cytosine-5)-methyltransferase 3C (740 aa).

2 disordered regions span residues 75 to 99 (LTGDGDEDRDGEVGGSSGSGTPVMP) and 248 to 312 (FKPT…DVTN). The ADD domain maps to 309-441 (DVTNNKGNLE…LQDFFTTDPD (133 aa)). The GATA-type; atypical zinc finger occupies 320 to 350 (HCLSCGRKDPVSFHPLFEGGLCQSCRDRFLE). The PHD-type; atypical zinc-finger motif lies at 361–417 (QSYCTVCCEGRELLLCSNTSCCRCFCVECLEVLVGAGTAEDVKLQEPWSCYMCLPQR). Residues 462–740 (IRVLSLFDGI…APLKDHFACE (279 aa)) enclose the SAM-dependent MTase C5-type domain. I471, T473, E492, D514, and I515 together coordinate S-adenosyl-L-methionine. The active site involves C538. Residues R719 and W721 each contribute to the S-adenosyl-L-methionine site.

It belongs to the class I-like SAM-binding methyltransferase superfamily. C5-methyltransferase family. In terms of assembly, homodimer. Interacts with DNMT3L. Interacts with SPOCD1; recruiting Dnmt3C to transposons. As to expression, specifically expressed in testis.

The protein resides in the nucleus. The catalysed reaction is a 2'-deoxycytidine in DNA + S-adenosyl-L-methionine = a 5-methyl-2'-deoxycytidine in DNA + S-adenosyl-L-homocysteine + H(+). DNA methyltransferase that specifically methylates the promoters of evolutionarily young retrotransposons in the male germline. De novo methylation and subsequent repression of transposable elements prevents their mobilization, which is essential for germline integrity. Compared to Dnmt3a and Dnmt3b, shows lower DNA methyltransferase efficiency. In Mus musculus (Mouse), this protein is DNA (cytosine-5)-methyltransferase 3C.